A 323-amino-acid chain; its full sequence is NADH-ubiquinone oxidoreductase chain 1 (323 aa).

8 consecutive transmembrane segments (helical) span residues 8–28 (LINP…LTLI), 75–95 (MFLI…APLP), 105–125 (LGIL…LGSG), 151–171 (LGLI…TTLM), 177–197 (MWLI…TLAE), 234–254 (ANIL…SSFM), 258–278 (ELTT…FLWV), and 298–318 (FLPI…SMLG).

This sequence belongs to the complex I subunit 1 family. In terms of assembly, core subunit of respiratory chain NADH dehydrogenase (Complex I) which is composed of 45 different subunits.

It is found in the mitochondrion inner membrane. It carries out the reaction a ubiquinone + NADH + 5 H(+)(in) = a ubiquinol + NAD(+) + 4 H(+)(out). Functionally, core subunit of the mitochondrial membrane respiratory chain NADH dehydrogenase (Complex I) which catalyzes electron transfer from NADH through the respiratory chain, using ubiquinone as an electron acceptor. Essential for the catalytic activity and assembly of complex I. The polypeptide is NADH-ubiquinone oxidoreductase chain 1 (mt-nd1) (Xenopus laevis (African clawed frog)).